The sequence spans 245 residues: Biosynthetic peptidoglycan transglycosylase (245 aa).

The helical transmembrane segment at 24–44 threads the bilayer; that stretch reads LVVIGAWLAGILLFSFLPVPF.

Belongs to the glycosyltransferase 51 family.

It is found in the cell inner membrane. It carries out the reaction [GlcNAc-(1-&gt;4)-Mur2Ac(oyl-L-Ala-gamma-D-Glu-L-Lys-D-Ala-D-Ala)](n)-di-trans,octa-cis-undecaprenyl diphosphate + beta-D-GlcNAc-(1-&gt;4)-Mur2Ac(oyl-L-Ala-gamma-D-Glu-L-Lys-D-Ala-D-Ala)-di-trans,octa-cis-undecaprenyl diphosphate = [GlcNAc-(1-&gt;4)-Mur2Ac(oyl-L-Ala-gamma-D-Glu-L-Lys-D-Ala-D-Ala)](n+1)-di-trans,octa-cis-undecaprenyl diphosphate + di-trans,octa-cis-undecaprenyl diphosphate + H(+). It participates in cell wall biogenesis; peptidoglycan biosynthesis. Peptidoglycan polymerase that catalyzes glycan chain elongation from lipid-linked precursors. The sequence is that of Biosynthetic peptidoglycan transglycosylase from Pectobacterium atrosepticum (strain SCRI 1043 / ATCC BAA-672) (Erwinia carotovora subsp. atroseptica).